The sequence spans 235 residues: Uridylate kinase (235 aa).

An ATP-binding site is contributed by 8-11; it reads KLSG. Residue Gly49 coordinates UMP. 2 residues coordinate ATP: Gly50 and Arg54. Residue 131 to 138 participates in UMP binding; the sequence is TGNPYFST. Residues Asn159, Tyr165, and Asp168 each contribute to the ATP site.

This sequence belongs to the UMP kinase family. In terms of assembly, homohexamer.

The protein resides in the cytoplasm. It carries out the reaction UMP + ATP = UDP + ADP. Its pathway is pyrimidine metabolism; CTP biosynthesis via de novo pathway; UDP from UMP (UMPK route): step 1/1. Inhibited by UTP. Catalyzes the reversible phosphorylation of UMP to UDP. The chain is Uridylate kinase from Mycoplasma pneumoniae (strain ATCC 29342 / M129 / Subtype 1) (Mycoplasmoides pneumoniae).